A 450-amino-acid chain; its full sequence is D-inositol 3-phosphate glycosyltransferase (450 aa).

Residue H21 participates in 1D-myo-inositol 3-phosphate binding. UDP-N-acetyl-alpha-D-glucosamine is bound by residues 27–28 (QP) and G35. Residues 32-37 (DAGGMN), K90, Y123, T147, and R167 contribute to the 1D-myo-inositol 3-phosphate site. The UDP-N-acetyl-alpha-D-glucosamine site is built by R241, K246, and V307. Residues Y316, R317, and A319 each contribute to the Mg(2+) site. UDP-N-acetyl-alpha-D-glucosamine is bound by residues E329 and E337. T343 serves as a coordination point for Mg(2+).

Belongs to the glycosyltransferase group 1 family. MshA subfamily. In terms of assembly, homodimer.

The enzyme catalyses 1D-myo-inositol 3-phosphate + UDP-N-acetyl-alpha-D-glucosamine = 1D-myo-inositol 2-acetamido-2-deoxy-alpha-D-glucopyranoside 3-phosphate + UDP + H(+). Its function is as follows. Catalyzes the transfer of a N-acetyl-glucosamine moiety to 1D-myo-inositol 3-phosphate to produce 1D-myo-inositol 2-acetamido-2-deoxy-glucopyranoside 3-phosphate in the mycothiol biosynthesis pathway. The sequence is that of D-inositol 3-phosphate glycosyltransferase from Geodermatophilus obscurus (strain ATCC 25078 / DSM 43160 / JCM 3152 / CCUG 61914 / KCC A-0152 / KCTC 9177 / NBRC 13315 / NRRL B-3577 / G-20).